A 270-amino-acid polypeptide reads, in one-letter code: Glucosamine-6-phosphate deaminase (270 aa).

Aspartate 72 acts as the Proton acceptor; for enolization step in catalysis. Aspartate 141 (for ring-opening step) is an active-site residue. The active-site Proton acceptor; for ring-opening step is histidine 143. The active-site For ring-opening step is glutamate 148.

Belongs to the glucosamine/galactosamine-6-phosphate isomerase family. NagB subfamily. Homohexamer.

The catalysed reaction is alpha-D-glucosamine 6-phosphate + H2O = beta-D-fructose 6-phosphate + NH4(+). It participates in amino-sugar metabolism; N-acetylneuraminate degradation; D-fructose 6-phosphate from N-acetylneuraminate: step 5/5. Allosterically activated by N-acetylglucosamine 6-phosphate (GlcNAc6P). Catalyzes the reversible isomerization-deamination of glucosamine 6-phosphate (GlcN6P) to form fructose 6-phosphate (Fru6P) and ammonium ion. The sequence is that of Glucosamine-6-phosphate deaminase from Haemophilus influenzae (strain 86-028NP).